Consider the following 231-residue polypeptide: Uracil-DNA glycosylase (231 aa).

D70 serves as the catalytic Proton acceptor.

The protein belongs to the uracil-DNA glycosylase (UDG) superfamily. UNG family.

It localises to the cytoplasm. It carries out the reaction Hydrolyzes single-stranded DNA or mismatched double-stranded DNA and polynucleotides, releasing free uracil.. Functionally, excises uracil residues from the DNA which can arise as a result of misincorporation of dUMP residues by DNA polymerase or due to deamination of cytosine. The polypeptide is Uracil-DNA glycosylase (Campylobacter curvus (strain 525.92)).